The chain runs to 313 residues: Homeobox protein knotted-1-like 2 (313 aa).

Residues 13-40 form a disordered region; the sequence is DPSSAAASSPNPSFSPGGGGGGGVGGGE. The span at 14 to 27 shows a compositional bias: low complexity; that stretch reads PSSAAASSPNPSFS. Positions 28–38 are enriched in gly residues; it reads PGGGGGGGVGG. The 21-residue stretch at 205–225 folds into the ELK domain; sequence ELKNELKQGYKEKLVDIREEI. A DNA-binding region (homeobox; TALE-type) is located at residues 226-289; sequence LRKRRAGKLP…NQRKRNWHSN (64 aa). Residues 282–313 form a disordered region; that stretch reads RKRNWHSNPASSGEKTKKKRNVTGDGGAEQSW.

This sequence belongs to the TALE/KNOX homeobox family. In terms of tissue distribution, isoform 1 is expressed in roots, leaf blades, leaf sheaths and flowers. Isoform 2 is expressed in leaf blades, leaf sheaths and flowers.

The protein resides in the nucleus. The chain is Homeobox protein knotted-1-like 2 (HOS58) from Oryza sativa subsp. japonica (Rice).